Here is a 667-residue protein sequence, read N- to C-terminus: Ribosomal oxygenase 1 (667 aa).

Met-1 carries the post-translational modification N-acetylmethionine. A compositionally biased stretch (low complexity) spans 1–11; it reads MDGLRASAGLL. The segment at 1 to 99 is disordered; sequence MDGLRASAGL…ATGREPHGQL (99 aa). Basic residues-rich tracts occupy residues 12–22 and 35–44; these read RRGRLRRRRQQ and RPRKIRRQLR. 3 positions are modified to phosphoserine: Ser-61, Ser-64, and Ser-108. Residues 322 to 467 form the JmjC domain; the sequence is CSLRLLCPQA…DFLEAVLPLA (146 aa). Residues His-368, Asp-370, and His-433 each coordinate Fe cation.

This sequence belongs to the ROX family. NO66 subfamily. Interacts with SP7/OSX; the interaction is direct. Interacts with MYC. Interacts with PHF19; leading to its recruitment to H3K36me3 sites. It depends on Fe(2+) as a cofactor.

It is found in the nucleus. Its subcellular location is the nucleolus. It localises to the nucleoplasm. The enzyme catalyses N(6),N(6)-dimethyl-L-lysyl(36)-[histone H3] + 2 2-oxoglutarate + 2 O2 = L-lysyl(36)-[histone H3] + 2 formaldehyde + 2 succinate + 2 CO2. The catalysed reaction is N(6)-methyl-L-lysyl-[protein] + 2-oxoglutarate + O2 = L-lysyl-[protein] + formaldehyde + succinate + CO2. It carries out the reaction L-histidyl-[protein] + 2-oxoglutarate + O2 = (3S)-3-hydroxy-L-histidyl-[protein] + succinate + CO2. Functionally, oxygenase that can act as both a histone lysine demethylase and a ribosomal histidine hydroxylase. Specifically demethylates 'Lys-4' (H3K4me) and 'Lys-36' (H3K36me) of histone H3, thereby playing a central role in histone code. Preferentially demethylates trimethylated H3 'Lys-4' (H3K4me3) and monomethylated H3 'Lys-4' (H3K4me1) residues, while it has weaker activity for dimethylated H3 'Lys-36' (H3K36me2). Acts as a regulator of osteoblast differentiation via its interaction with SP7/OSX by demethylating H3K4me and H3K36me, thereby inhibiting SP7/OSX-mediated promoter activation. Also catalyzes demethylation of non-histone proteins, such as CGAS: demethylation of monomethylated CGAS promotes interaction between CGAS and PARP1, followed by PARP1 inactivation. Also catalyzes the hydroxylation of 60S ribosomal protein L8 on 'His-216', thereby playing a role in ribosome biogenesis. Participates in MYC-induced transcriptional activation. The chain is Ribosomal oxygenase 1 (RIOX1) from Bos taurus (Bovine).